The chain runs to 460 residues: Methionine aminopeptidase 2-1 (460 aa).

A disordered region spans residues 1–90; sequence MGSKSPNGED…SAQAAQQTAP (90 aa). The segment covering 30-39 has biased composition (low complexity); it reads SAAASGLLRG. Over residues 42–52 the composition is skewed to acidic residues; sequence EDQDEDGDDDE. The segment covering 69–81 has biased composition (basic residues); that stretch reads TKKRRRNNKKKKS. H212 is a substrate binding site. The a divalent metal cation site is built by D233, D244, and H313. Position 321 (H321) interacts with substrate. E346 and E441 together coordinate a divalent metal cation.

The protein belongs to the peptidase M24A family. Methionine aminopeptidase eukaryotic type 2 subfamily. It depends on Co(2+) as a cofactor. Zn(2+) serves as cofactor. Mn(2+) is required as a cofactor. The cofactor is Fe(2+).

Its subcellular location is the cytoplasm. It carries out the reaction Release of N-terminal amino acids, preferentially methionine, from peptides and arylamides.. Its function is as follows. Cotranslationally removes the N-terminal methionine from nascent proteins. The N-terminal methionine is often cleaved when the second residue in the primary sequence is small and uncharged (Met-Ala-, Cys, Gly, Pro, Ser, Thr, or Val). The protein is Methionine aminopeptidase 2-1 of Leptosphaeria maculans (strain JN3 / isolate v23.1.3 / race Av1-4-5-6-7-8) (Blackleg fungus).